The following is a 172-amino-acid chain: Protein GrpE (172 aa).

It belongs to the GrpE family. In terms of assembly, homodimer.

Its subcellular location is the cytoplasm. Its function is as follows. Participates actively in the response to hyperosmotic and heat shock by preventing the aggregation of stress-denatured proteins, in association with DnaK and GrpE. It is the nucleotide exchange factor for DnaK and may function as a thermosensor. Unfolded proteins bind initially to DnaJ; upon interaction with the DnaJ-bound protein, DnaK hydrolyzes its bound ATP, resulting in the formation of a stable complex. GrpE releases ADP from DnaK; ATP binding to DnaK triggers the release of the substrate protein, thus completing the reaction cycle. Several rounds of ATP-dependent interactions between DnaJ, DnaK and GrpE are required for fully efficient folding. The protein is Protein GrpE of Thermotoga maritima (strain ATCC 43589 / DSM 3109 / JCM 10099 / NBRC 100826 / MSB8).